A 172-amino-acid polypeptide reads, in one-letter code: Nicotinamide-nucleotide adenylyltransferase (172 aa).

The protein belongs to the archaeal NMN adenylyltransferase family.

The protein localises to the cytoplasm. It carries out the reaction beta-nicotinamide D-ribonucleotide + ATP + H(+) = diphosphate + NAD(+). Its pathway is cofactor biosynthesis; NAD(+) biosynthesis; NAD(+) from nicotinamide D-ribonucleotide: step 1/1. This chain is Nicotinamide-nucleotide adenylyltransferase, found in Sulfurisphaera tokodaii (strain DSM 16993 / JCM 10545 / NBRC 100140 / 7) (Sulfolobus tokodaii).